Consider the following 72-residue polypeptide: Translation initiation factor IF-1 (72 aa).

The S1-like domain occupies M1–K72.

This sequence belongs to the IF-1 family. As to quaternary structure, component of the 30S ribosomal translation pre-initiation complex which assembles on the 30S ribosome in the order IF-2 and IF-3, IF-1 and N-formylmethionyl-tRNA(fMet); mRNA recruitment can occur at any time during PIC assembly.

It localises to the cytoplasm. Functionally, one of the essential components for the initiation of protein synthesis. Stabilizes the binding of IF-2 and IF-3 on the 30S subunit to which N-formylmethionyl-tRNA(fMet) subsequently binds. Helps modulate mRNA selection, yielding the 30S pre-initiation complex (PIC). Upon addition of the 50S ribosomal subunit IF-1, IF-2 and IF-3 are released leaving the mature 70S translation initiation complex. The sequence is that of Translation initiation factor IF-1 from Aliarcobacter butzleri (strain RM4018) (Arcobacter butzleri).